The chain runs to 341 residues: Alanine racemase (341 aa).

Residue Lys33 is the Proton acceptor; specific for D-alanine of the active site. Lys33 carries the post-translational modification N6-(pyridoxal phosphate)lysine. Residue Arg126 coordinates substrate. Residue Tyr236 is the Proton acceptor; specific for L-alanine of the active site. Residue Met284 participates in substrate binding.

It belongs to the alanine racemase family. Pyridoxal 5'-phosphate is required as a cofactor.

The enzyme catalyses L-alanine = D-alanine. It functions in the pathway amino-acid biosynthesis; D-alanine biosynthesis; D-alanine from L-alanine: step 1/1. Its function is as follows. Catalyzes the interconversion of L-alanine and D-alanine. The sequence is that of Alanine racemase (alr) from Aquifex pyrophilus.